The following is a 792-amino-acid chain: Probable CoA-transferase Rv1866 (792 aa).

D558 (nucleophile) is an active-site residue.

It belongs to the CoA-transferase III family.

Probable CoA-transferase. This is Probable CoA-transferase Rv1866 from Mycobacterium tuberculosis (strain ATCC 25618 / H37Rv).